The sequence spans 218 residues: Orotate phosphoribosyltransferase (218 aa).

K26 lines the 5-phospho-alpha-D-ribose 1-diphosphate pocket. 34 to 35 (FF) lines the orotate pocket. Residues 72-73 (YK), R99, K100, K103, H105, and 124-132 (DDVITAGTA) contribute to the 5-phospho-alpha-D-ribose 1-diphosphate site. 2 residues coordinate orotate: T128 and R156.

It belongs to the purine/pyrimidine phosphoribosyltransferase family. PyrE subfamily. In terms of assembly, homodimer. It depends on Mg(2+) as a cofactor.

It catalyses the reaction orotidine 5'-phosphate + diphosphate = orotate + 5-phospho-alpha-D-ribose 1-diphosphate. Its pathway is pyrimidine metabolism; UMP biosynthesis via de novo pathway; UMP from orotate: step 1/2. Its function is as follows. Catalyzes the transfer of a ribosyl phosphate group from 5-phosphoribose 1-diphosphate to orotate, leading to the formation of orotidine monophosphate (OMP). The protein is Orotate phosphoribosyltransferase of Hamiltonella defensa subsp. Acyrthosiphon pisum (strain 5AT).